Here is a 48-residue protein sequence, read N- to C-terminus: Probable antitoxin PhoAT (48 aa).

Belongs to the PhoAT antitoxin family. In terms of assembly, interacts with toxin PhoH2.

Probable antitoxin component of a type II toxin-antitoxin (TA) system. The probable cognate antitoxin is PhoAT; the toxin gene can be expressed in the absence of the antitoxin gene in M.smegmatis strain mc(2)155. The polypeptide is Probable antitoxin PhoAT (Mycolicibacterium smegmatis (strain ATCC 700084 / mc(2)155) (Mycobacterium smegmatis)).